The following is a 117-amino-acid chain: UPF0295 protein RBAM_008830 (117 aa).

The next 2 membrane-spanning stretches (helical) occupy residues 13 to 33 and 41 to 61; these read TFAL…LFFK and LFMI…FWIG.

The protein belongs to the UPF0295 family.

The protein localises to the cell membrane. This chain is UPF0295 protein RBAM_008830, found in Bacillus velezensis (strain DSM 23117 / BGSC 10A6 / LMG 26770 / FZB42) (Bacillus amyloliquefaciens subsp. plantarum).